A 234-amino-acid polypeptide reads, in one-letter code: tRNA1(Val) (adenine(37)-N6)-methyltransferase (234 aa).

The protein belongs to the methyltransferase superfamily. tRNA (adenine-N(6)-)-methyltransferase family.

The protein localises to the cytoplasm. The catalysed reaction is adenosine(37) in tRNA1(Val) + S-adenosyl-L-methionine = N(6)-methyladenosine(37) in tRNA1(Val) + S-adenosyl-L-homocysteine + H(+). Its function is as follows. Specifically methylates the adenine in position 37 of tRNA(1)(Val) (anticodon cmo5UAC). In Aliivibrio fischeri (strain MJ11) (Vibrio fischeri), this protein is tRNA1(Val) (adenine(37)-N6)-methyltransferase.